A 47-amino-acid chain; its full sequence is Fasciclin-like arabinogalactan protein (47 aa).

In terms of domain architecture, FAS1 spans 1–47 (APTPATLNGLTIFAPNDEAFKATGVPDLSKLSNAPMVSLLQYHAAAR).

Belongs to the fasciclin-like AGP family.

In terms of biological role, may be a cell surface adhesion protein. In Jatropha curcas (Barbados nut), this protein is Fasciclin-like arabinogalactan protein.